The chain runs to 304 residues: Acetylglutamate kinase (304 aa).

Residues 75-76, R97, and N202 each bind substrate; that span reads GG.

The protein belongs to the acetylglutamate kinase family. ArgB subfamily.

Its subcellular location is the cytoplasm. The catalysed reaction is N-acetyl-L-glutamate + ATP = N-acetyl-L-glutamyl 5-phosphate + ADP. The protein operates within amino-acid biosynthesis; L-arginine biosynthesis; N(2)-acetyl-L-ornithine from L-glutamate: step 2/4. Its function is as follows. Catalyzes the ATP-dependent phosphorylation of N-acetyl-L-glutamate. This Parvibaculum lavamentivorans (strain DS-1 / DSM 13023 / NCIMB 13966) protein is Acetylglutamate kinase.